A 449-amino-acid chain; its full sequence is MFS-type transporter 1 (449 aa).

A compositionally biased stretch (basic and acidic residues) spans 1 to 37 (MTHSSSNEHEKEDDRRASDDMMDRDDQNAKEEQDVSK). The segment at 1-43 (MTHSSSNEHEKEDDRRASDDMMDRDDQNAKEEQDVSKDAPPVN) is disordered. 6 consecutive transmembrane segments (helical) span residues 61–81 (VAGG…IGIF), 97–117 (TISW…LVVG), 127–147 (YILL…SLST), 152–172 (ILLS…TPAV), 185–205 (LANG…PIMF), and 212–232 (VGFP…LIIA). Asn-233 carries an N-linked (GlcNAc...) asparagine glycan. Helical transmembrane passes span 262 to 282 (LLTT…INYI), 298 to 318 (YLIP…GFVA), 326 to 346 (VHTF…LPAA), 349 to 369 (APII…VAIL), 390 to 410 (FGVL…FVAH), and 420 to 440 (IWTG…RISL).

Belongs to the major facilitator superfamily. Monocarboxylate porter (TC 2.A.1.13) family.

The protein resides in the cell membrane. It catalyses the reaction erythrostominone(in) = erythrostominone(out). The enzyme catalyses deoxyerythrostominone(in) = deoxyerythrostominone(out). It carries out the reaction epierythrostominol(in) = epierythrostominol(out). The catalysed reaction is deoxyerythrostominol(in) = deoxyerythrostominol(out). Its function is as follows. MFS-type transporter that mediates the secretion of the 4 major naphthoquinone derivatives produced, erythrostominone (NQ1), deoxyerythrostominone (NQ2), epierythrostominol (NQ4), and deoxyerythrostominol (NQ5), as well as of 3 newly identified naphthoquinone derivatives termed NQ7, NQ8 and NQ9. This Ophiocordyceps sp. (strain BCC 1869) (Entomopathogenic fungus) protein is MFS-type transporter 1.